The following is a 565-amino-acid chain: Adenine deaminase 1 (565 aa).

It belongs to the metallo-dependent hydrolases superfamily. Adenine deaminase family. The cofactor is Mn(2+).

The catalysed reaction is adenine + H2O + H(+) = hypoxanthine + NH4(+). This chain is Adenine deaminase 1, found in Rhizobium etli (strain ATCC 51251 / DSM 11541 / JCM 21823 / NBRC 15573 / CFN 42).